We begin with the raw amino-acid sequence, 251 residues long: uncharacterized protein (251 aa).

A signal peptide spans 1 to 18; the sequence is MRILIILSIILCSFFARA.

Belongs to the MlaA family.

This is an uncharacterized protein from Rickettsia typhi (strain ATCC VR-144 / Wilmington).